A 341-amino-acid chain; its full sequence is Anthranilate phosphoribosyltransferase (341 aa).

Residues Gly85, 88 to 89, Thr93, 95 to 98, 113 to 121, and Ser125 contribute to the 5-phospho-alpha-D-ribose 1-diphosphate site; these read GD, NIST, and KHGNRSASG. Gly85 provides a ligand contact to anthranilate. Residue Ser97 participates in Mg(2+) binding. Residue Asn116 coordinates anthranilate. Arg171 lines the anthranilate pocket. Mg(2+) is bound by residues Asp230 and Glu231.

Belongs to the anthranilate phosphoribosyltransferase family. Homodimer. Mg(2+) serves as cofactor.

It catalyses the reaction N-(5-phospho-beta-D-ribosyl)anthranilate + diphosphate = 5-phospho-alpha-D-ribose 1-diphosphate + anthranilate. It participates in amino-acid biosynthesis; L-tryptophan biosynthesis; L-tryptophan from chorismate: step 2/5. In terms of biological role, catalyzes the transfer of the phosphoribosyl group of 5-phosphorylribose-1-pyrophosphate (PRPP) to anthranilate to yield N-(5'-phosphoribosyl)-anthranilate (PRA). This is Anthranilate phosphoribosyltransferase from Prochlorococcus marinus (strain SARG / CCMP1375 / SS120).